A 237-amino-acid polypeptide reads, in one-letter code: Uracil-DNA glycosylase (237 aa).

Asp-77 acts as the Proton acceptor in catalysis.

Belongs to the uracil-DNA glycosylase (UDG) superfamily. UNG family.

The protein resides in the cytoplasm. It catalyses the reaction Hydrolyzes single-stranded DNA or mismatched double-stranded DNA and polynucleotides, releasing free uracil.. Functionally, excises uracil residues from the DNA which can arise as a result of misincorporation of dUMP residues by DNA polymerase or due to deamination of cytosine. This Acinetobacter baumannii (strain AB307-0294) protein is Uracil-DNA glycosylase.